The following is a 535-amino-acid chain: Peptide chain release factor 3 (535 aa).

In terms of domain architecture, tr-type G spans 8 to 277; that stretch reads KRRRTFAIIS…TLVELAPPPG (270 aa). Residues 17 to 24, 85 to 89, and 139 to 142 each bind GTP; these read SHPDAGKT, DTPGH, and NKLD.

This sequence belongs to the TRAFAC class translation factor GTPase superfamily. Classic translation factor GTPase family. PrfC subfamily.

The protein localises to the cytoplasm. Functionally, increases the formation of ribosomal termination complexes and stimulates activities of RF-1 and RF-2. It binds guanine nucleotides and has strong preference for UGA stop codons. It may interact directly with the ribosome. The stimulation of RF-1 and RF-2 is significantly reduced by GTP and GDP, but not by GMP. The protein is Peptide chain release factor 3 of Nitrosomonas europaea (strain ATCC 19718 / CIP 103999 / KCTC 2705 / NBRC 14298).